Consider the following 381-residue polypeptide: Alcohol dehydrogenase-like 6 (381 aa).

Positions 53, 55, 72, 102, 105, 108, 116, and 179 each coordinate Zn(2+). Serine 55 and histidine 72 together coordinate an alcohol. NAD(+) is bound at residue serine 55. Residues 204–209 (GLGTVG), aspartate 228, lysine 233, 297–299 (LGV), phenylalanine 324, and arginine 374 each bind NAD(+).

It belongs to the zinc-containing alcohol dehydrogenase family. Class-III subfamily. As to quaternary structure, homodimer. It depends on Zn(2+) as a cofactor.

It localises to the cytoplasm. It catalyses the reaction a primary alcohol + NAD(+) = an aldehyde + NADH + H(+). The catalysed reaction is a secondary alcohol + NAD(+) = a ketone + NADH + H(+). The sequence is that of Alcohol dehydrogenase-like 6 from Arabidopsis thaliana (Mouse-ear cress).